The sequence spans 178 residues: ATP-dependent protease subunit HslV (178 aa).

Threonine 7 is a catalytic residue. Na(+) contacts are provided by glycine 162, cysteine 165, and threonine 168.

Belongs to the peptidase T1B family. HslV subfamily. In terms of assembly, a double ring-shaped homohexamer of HslV is capped on each side by a ring-shaped HslU homohexamer. The assembly of the HslU/HslV complex is dependent on binding of ATP.

The protein localises to the cytoplasm. It catalyses the reaction ATP-dependent cleavage of peptide bonds with broad specificity.. With respect to regulation, allosterically activated by HslU binding. Protease subunit of a proteasome-like degradation complex believed to be a general protein degrading machinery. This chain is ATP-dependent protease subunit HslV, found in Burkholderia ambifaria (strain ATCC BAA-244 / DSM 16087 / CCUG 44356 / LMG 19182 / AMMD) (Burkholderia cepacia (strain AMMD)).